A 294-amino-acid polypeptide reads, in one-letter code: 4-hydroxy-tetrahydrodipicolinate synthase (294 aa).

Position 48 (threonine 48) interacts with pyruvate. Tyrosine 136 acts as the Proton donor/acceptor in catalysis. The Schiff-base intermediate with substrate role is filled by lysine 164. Residue isoleucine 206 participates in pyruvate binding.

It belongs to the DapA family. In terms of assembly, homotetramer; dimer of dimers.

It is found in the cytoplasm. It carries out the reaction L-aspartate 4-semialdehyde + pyruvate = (2S,4S)-4-hydroxy-2,3,4,5-tetrahydrodipicolinate + H2O + H(+). It functions in the pathway amino-acid biosynthesis; L-lysine biosynthesis via DAP pathway; (S)-tetrahydrodipicolinate from L-aspartate: step 3/4. Its function is as follows. Catalyzes the condensation of (S)-aspartate-beta-semialdehyde [(S)-ASA] and pyruvate to 4-hydroxy-tetrahydrodipicolinate (HTPA). This Phenylobacterium zucineum (strain HLK1) protein is 4-hydroxy-tetrahydrodipicolinate synthase.